Here is a 745-residue protein sequence, read N- to C-terminus: Elongation factor G, mitochondrial (745 aa).

A tr-type G domain is found at 40 to 317; sequence ERIRNIGISA…AVLDYLPNPG (278 aa). GTP is bound by residues 49–56, 116–120, and 170–173; these read AHIDSGKT, DTPGH, and NKLD.

It belongs to the TRAFAC class translation factor GTPase superfamily. Classic translation factor GTPase family. EF-G/EF-2 subfamily.

It localises to the mitochondrion. Its pathway is protein biosynthesis; polypeptide chain elongation. Functionally, mitochondrial GTPase that catalyzes the GTP-dependent ribosomal translocation step during translation elongation. During this step, the ribosome changes from the pre-translocational (PRE) to the post-translocational (POST) state as the newly formed A-site-bound peptidyl-tRNA and P-site-bound deacylated tRNA move to the P and E sites, respectively. Catalyzes the coordinated movement of the two tRNA molecules, the mRNA and conformational changes in the ribosome. Essential during development as it acts as a retrograde signal from mitochondria to the nucleus to slow down cell proliferation if mitochondrial energy output is low. In Drosophila melanogaster (Fruit fly), this protein is Elongation factor G, mitochondrial.